A 721-amino-acid chain; its full sequence is Dipeptidyl-peptidase 5 (721 aa).

The first 18 residues, 1–18, serve as a signal peptide directing secretion; it reads MGAFRWLSIAAAASTALA. 4 N-linked (GlcNAc...) asparagine glycosylation sites follow: Asn-75, Asn-94, Asn-151, and Asn-254. The segment at 271–297 is disordered; sequence ARPINGPDSPGTPKGIKGDSSSPVFSP. N-linked (GlcNAc...) asparagine glycans are attached at residues Asn-380 and Asn-450. Ser-560 (charge relay system) is an active-site residue. Asn-607 carries N-linked (GlcNAc...) asparagine glycosylation. Active-site charge relay system residues include Asp-643 and His-675.

The protein belongs to the peptidase S9C family. N-glycosylated. Expressed in mycelia and conidia.

The protein localises to the secreted. Its function is as follows. May be involved in metabolism of dipeptides or may affect host defense mechanisms. Has a substrate specificity limited to the hydrolysis of X-Ala, His-Ser, and Ser-Tyr dipeptides at a neutral pH optimum. The sequence is that of Dipeptidyl-peptidase 5 from Aspergillus fumigatus (strain CBS 144.89 / FGSC A1163 / CEA10) (Neosartorya fumigata).